We begin with the raw amino-acid sequence, 243 residues long: uncharacterized protein (243 aa).

The protein resides in the nucleus. Its subcellular location is the nucleolus. This is an uncharacterized protein from Schizosaccharomyces pombe (strain 972 / ATCC 24843) (Fission yeast).